The sequence spans 427 residues: Glutamate-1-semialdehyde 2,1-aminomutase (427 aa).

Lys-265 carries the post-translational modification N6-(pyridoxal phosphate)lysine.

Belongs to the class-III pyridoxal-phosphate-dependent aminotransferase family. HemL subfamily. Homodimer. Pyridoxal 5'-phosphate serves as cofactor.

It localises to the cytoplasm. The enzyme catalyses (S)-4-amino-5-oxopentanoate = 5-aminolevulinate. The protein operates within porphyrin-containing compound metabolism; protoporphyrin-IX biosynthesis; 5-aminolevulinate from L-glutamyl-tRNA(Glu): step 2/2. This Neisseria meningitidis serogroup C / serotype 2a (strain ATCC 700532 / DSM 15464 / FAM18) protein is Glutamate-1-semialdehyde 2,1-aminomutase.